Here is a 1029-residue protein sequence, read N- to C-terminus: Cilia- and flagella-associated protein 91 (1029 aa).

Disordered stretches follow at residues 72-97 and 117-170; these read NYRPAANDPNDTRQRSDALAVSGPNR and PPSQ…PWEP. Positions 272–299 form a coiled coil; it reads LELLDNALQVREEELDDENRLRVEARKE. Residues 837-854 are compositionally biased toward low complexity; that stretch reads ENQDQQEPQPQPQPSSSS. Disordered stretches follow at residues 837–861 and 876–1029; these read ENQDQQEPQPQPQPSSSSGALDLAD and GEPS…EAAE. Over residues 890–910 the composition is skewed to acidic residues; it reads QQLEADAEAEAEAEAEAEAGA. Over residues 911-921 the composition is skewed to low complexity; the sequence is EAEASAQAGAE. A compositionally biased stretch (acidic residues) spans 922–932; it reads AEAEAGVEAEA. A compositionally biased stretch (low complexity) spans 933–944; it reads EASAGAEASVGA. Residues 964 to 982 are compositionally biased toward acidic residues; the sequence is PEAEAEAEAGAEAEAENGA. A compositionally biased stretch (basic and acidic residues) spans 984–999; the sequence is AEARLGGEEEGFREGE. Residues 1000–1015 are compositionally biased toward gly residues; sequence GQGGAAAGEAGPGGEL. The span at 1016 to 1029 shows a compositional bias: acidic residues; the sequence is AEGEGEAGEGEAAE.

Belongs to the CFAP91 family. As to quaternary structure, identified in a spoke-associated complex containing CFAP61, CFAP91 and CFAP251; the complex is associated with the radial spokes of the axoneme. The complex associates with Calmodulin; the association is calcium sensitive. Interacts with RSP3.

Its subcellular location is the cytoplasm. It is found in the cytoskeleton. It localises to the flagellum axoneme. As component of a spoke-associated complex, regulates flagellar dynein activity by mediating regulatory signals between the radial spokes and dynein arms. This is Cilia- and flagella-associated protein 91 from Chlamydomonas reinhardtii (Chlamydomonas smithii).